The chain runs to 257 residues: Matrix protein (257 aa).

A Nuclear export signal motif is present at residues 193–205; that stretch reads VAPYAGLTLVINI.

Belongs to the pneumovirinae M protein family. In terms of assembly, forms dimers. Forms higher-order oligomers. Interacts with glycoprotein G (via N-terminus). Interacts with protein M2-1; this interaction directs the matrix protein localization to cytoplasmic inclusions comprising viral proteins L, N, P, and M2-1 and mediates the matrix protein association with the nucleocapsid.

Its subcellular location is the virion. It is found in the host cytoplasm. It localises to the host nucleus. The protein resides in the host cell membrane. In terms of biological role, plays a crucial role in virus assembly into filaments and budding. Early in infection, localizes in the nucleus where it may inhibit host cell transcription. Later in infection, traffics to the cytoplasm to associate with inclusion bodies, the site of viral transcription and replication. During virus assembly and budding, acts as a bridge between the nucleocapsid and the lipid bilayer. The sequence is that of Matrix protein (M) from Murine pneumonia virus (strain 15) (MPV).